Reading from the N-terminus, the 60-residue chain is Large ribosomal subunit protein bL32 (60 aa).

The protein belongs to the bacterial ribosomal protein bL32 family.

This Thermotoga maritima (strain ATCC 43589 / DSM 3109 / JCM 10099 / NBRC 100826 / MSB8) protein is Large ribosomal subunit protein bL32 (rpmF).